A 411-amino-acid polypeptide reads, in one-letter code: Imidazolonepropionase (411 aa).

Fe(3+) is bound by residues histidine 75 and histidine 77. Residues histidine 75 and histidine 77 each coordinate Zn(2+). 4-imidazolone-5-propanoate-binding residues include arginine 84, tyrosine 147, and histidine 180. Position 147 (tyrosine 147) interacts with N-formimidoyl-L-glutamate. Residue histidine 245 coordinates Fe(3+). Residue histidine 245 coordinates Zn(2+). Glutamine 248 contributes to the 4-imidazolone-5-propanoate binding site. Position 320 (aspartate 320) interacts with Fe(3+). Position 320 (aspartate 320) interacts with Zn(2+). Residues asparagine 322 and glycine 324 each coordinate N-formimidoyl-L-glutamate. Position 325 (threonine 325) interacts with 4-imidazolone-5-propanoate.

It belongs to the metallo-dependent hydrolases superfamily. HutI family. Requires Zn(2+) as cofactor. It depends on Fe(3+) as a cofactor.

It is found in the cytoplasm. It catalyses the reaction 4-imidazolone-5-propanoate + H2O = N-formimidoyl-L-glutamate. It functions in the pathway amino-acid degradation; L-histidine degradation into L-glutamate; N-formimidoyl-L-glutamate from L-histidine: step 3/3. Its function is as follows. Catalyzes the hydrolytic cleavage of the carbon-nitrogen bond in imidazolone-5-propanoate to yield N-formimidoyl-L-glutamate. It is the third step in the universal histidine degradation pathway. This chain is Imidazolonepropionase, found in Aeromonas salmonicida (strain A449).